Consider the following 113-residue polypeptide: uncharacterized protein (113 aa).

Disordered regions lie at residues 1–22 and 90–113; these read MGEH…PLAQ and DGRH…SDDL. The span at 90-99 shows a compositional bias: basic and acidic residues; that stretch reads DGRHTTESSF. The span at 100–113 shows a compositional bias: low complexity; the sequence is EHSSPSRSPQSDDL.

This is an uncharacterized protein from Mycobacterium tuberculosis (strain CDC 1551 / Oshkosh).